The primary structure comprises 88 residues: Apolipoprotein C-I (88 aa).

A signal peptide spans 1–26; the sequence is MRLILSLPVLVVVLSMVLEGPAPAQA.

This sequence belongs to the apolipoprotein C1 family.

It localises to the secreted. In terms of biological role, inhibitor of lipoprotein binding to the low density lipoprotein (LDL) receptor, LDL receptor-related protein, and very low density lipoprotein (VLDL) receptor. Associates with high density lipoproteins (HDL) and the triacylglycerol-rich lipoproteins in the plasma and makes up about 10% of the protein of the VLDL and 2% of that of HDL. Appears to interfere directly with fatty acid uptake and is also the major plasma inhibitor of cholesteryl ester transfer protein (CETP). Binds free fatty acids and reduces their intracellular esterification. Modulates the interaction of APOE with beta-migrating VLDL and inhibits binding of beta-VLDL to the LDL receptor-related protein. This Lycaon pictus (African wild dog) protein is Apolipoprotein C-I (APOC1).